The chain runs to 37 residues: Large ribosomal subunit protein bL36c (37 aa).

Component of the chloroplast large ribosomal subunit (LSU). Mature 70S chloroplast ribosomes of higher plants consist of a small (30S) and a large (50S) subunit. The 30S small subunit contains 1 molecule of ribosomal RNA (16S rRNA) and 24 different proteins. The 50S large subunit contains 3 rRNA molecules (23S, 5S and 4.5S rRNA) and 33 different proteins.

Its subcellular location is the plastid. The protein resides in the chloroplast. Functionally, component of the chloroplast ribosome (chloro-ribosome), a dedicated translation machinery responsible for the synthesis of chloroplast genome-encoded proteins, including proteins of the transcription and translation machinery and components of the photosynthetic apparatus. The polypeptide is Large ribosomal subunit protein bL36c (rpl36) (Spinacia oleracea (Spinach)).